We begin with the raw amino-acid sequence, 429 residues long: Phosphomethylpyrimidine synthase (429 aa).

Substrate contacts are provided by residues asparagine 66, methionine 95, tyrosine 124, histidine 163, 185-187 (SRG), 226-229 (DGLR), and glutamate 265. Histidine 269 is a binding site for Zn(2+). Tyrosine 292 contributes to the substrate binding site. Histidine 333 is a Zn(2+) binding site. Residues cysteine 407, cysteine 410, and cysteine 414 each coordinate [4Fe-4S] cluster.

This sequence belongs to the ThiC family. [4Fe-4S] cluster serves as cofactor.

It carries out the reaction 5-amino-1-(5-phospho-beta-D-ribosyl)imidazole + S-adenosyl-L-methionine = 4-amino-2-methyl-5-(phosphooxymethyl)pyrimidine + CO + 5'-deoxyadenosine + formate + L-methionine + 3 H(+). It participates in cofactor biosynthesis; thiamine diphosphate biosynthesis. In terms of biological role, catalyzes the synthesis of the hydroxymethylpyrimidine phosphate (HMP-P) moiety of thiamine from aminoimidazole ribotide (AIR) in a radical S-adenosyl-L-methionine (SAM)-dependent reaction. The chain is Phosphomethylpyrimidine synthase from Pyrococcus abyssi (strain GE5 / Orsay).